A 172-amino-acid polypeptide reads, in one-letter code: Allergen Bos d 2 (172 aa).

An N-terminal signal peptide occupies residues 1–16 (MKAVFLTLLFGLVCTA). Glutamine 17 bears the Pyrrolidone carboxylic acid mark. Cystine bridges form between cysteine 60–cysteine 64 and cysteine 79–cysteine 170.

Belongs to the calycin superfamily. Lipocalin family. As to expression, found exclusively in skin. Produced in sweat glands and transported to the skin surface.

The protein resides in the secreted. In terms of biological role, probable pheromone carrier. The sequence is that of Allergen Bos d 2 from Bos taurus (Bovine).